We begin with the raw amino-acid sequence, 361 residues long: tRNA pseudouridine synthase D (361 aa).

Residue D76 is the Nucleophile of the active site. In terms of domain architecture, TRUD spans 151 to 318; the sequence is GIPNYFGYQR…EQGSRRLAWI (168 aa).

It belongs to the pseudouridine synthase TruD family.

It carries out the reaction uridine(13) in tRNA = pseudouridine(13) in tRNA. In terms of biological role, responsible for synthesis of pseudouridine from uracil-13 in transfer RNAs. The chain is tRNA pseudouridine synthase D from Wolinella succinogenes (strain ATCC 29543 / DSM 1740 / CCUG 13145 / JCM 31913 / LMG 7466 / NCTC 11488 / FDC 602W) (Vibrio succinogenes).